A 206-amino-acid polypeptide reads, in one-letter code: METVGRPRGRPRGSKNKPKAPIFVTIDPPMSPYILEVPSGNDVVEALNRFCRGKAIGFCVLSGSGSVADVTLRQPSPAAPGSTITFHGKFDLLSVSATFLPPLPPTSLSPPVSNFFTVSLAGPQGKVIGGFVAGPLVAAGTVYFVATSFKNPSYHRLPATEEEQRNSAEGEEEGQSPPVSGGGGESMYVGGSDVIWDPNAKAPSPY.

Disordered stretches follow at residues 1–21 (METV…PKAP) and 160–206 (TEEE…PSPY). The a.T hook DNA-binding region spans 5–17 (GRPRGRPRGSKNK). The span at 7–18 (PRGRPRGSKNKP) shows a compositional bias: basic residues. In terms of domain architecture, PPC spans 27–173 (DPPMSPYILE…QRNSAEGEEE (147 aa)).

The protein localises to the nucleus. In terms of biological role, transcription factor that specifically binds AT-rich DNA sequences related to the nuclear matrix attachment regions (MARs). The chain is AT-hook motif nuclear-localized protein 28 from Arabidopsis thaliana (Mouse-ear cress).